The chain runs to 187 residues: Ubiquinone biosynthesis protein COQ4 homolog, mitochondrial (187 aa).

Positions 77, 78, 81, and 93 each coordinate Zn(2+).

Belongs to the COQ4 family. As to quaternary structure, component of a multi-subunit COQ enzyme complex. The cofactor is Zn(2+).

It localises to the mitochondrion inner membrane. The catalysed reaction is a 4-hydroxy-3-methoxy-5-(all-trans-polyprenyl)benzoate + H(+) = a 2-methoxy-6-(all-trans-polyprenyl)phenol + CO2. Its pathway is cofactor biosynthesis; ubiquinone biosynthesis. In terms of biological role, lyase that catalyzes the C1-decarboxylation of 4-hydroxy-3-methoxy-5-(all-trans-polyprenyl)benzoic acid into 2-methoxy-6-(all-trans-polyprenyl)phenol during ubiquinone biosynthesis. The sequence is that of Ubiquinone biosynthesis protein COQ4 homolog, mitochondrial from Leishmania infantum.